The primary structure comprises 298 residues: Tryptophan 2,3-dioxygenase (298 aa).

Substrate contacts are provided by residues 51 to 55 (FIIQH), Y113, and R117. H240 contacts heme. T254 serves as a coordination point for substrate.

This sequence belongs to the tryptophan 2,3-dioxygenase family. Homotetramer. It depends on heme as a cofactor.

It catalyses the reaction L-tryptophan + O2 = N-formyl-L-kynurenine. The protein operates within amino-acid degradation; L-tryptophan degradation via kynurenine pathway; L-kynurenine from L-tryptophan: step 1/2. Its function is as follows. Heme-dependent dioxygenase that catalyzes the oxidative cleavage of the L-tryptophan (L-Trp) pyrrole ring and converts L-tryptophan to N-formyl-L-kynurenine. Catalyzes the oxidative cleavage of the indole moiety. The chain is Tryptophan 2,3-dioxygenase from Xanthomonas campestris pv. campestris (strain 8004).